The sequence spans 650 residues: 1-deoxy-D-xylulose-5-phosphate synthase (650 aa).

Thiamine diphosphate is bound by residues His73 and 113-115 (SHA). Residue Asp145 participates in Mg(2+) binding. Thiamine diphosphate contacts are provided by residues 146–147 (GA), Asn175, Tyr287, and Glu369. Asn175 contacts Mg(2+). Positions 629–650 (SARPLPEDAERVPMRAEDDEQA) are disordered. The span at 633 to 644 (LPEDAERVPMRA) shows a compositional bias: basic and acidic residues.

It belongs to the transketolase family. DXPS subfamily. Homodimer. It depends on Mg(2+) as a cofactor. Requires thiamine diphosphate as cofactor.

The enzyme catalyses D-glyceraldehyde 3-phosphate + pyruvate + H(+) = 1-deoxy-D-xylulose 5-phosphate + CO2. Its pathway is metabolic intermediate biosynthesis; 1-deoxy-D-xylulose 5-phosphate biosynthesis; 1-deoxy-D-xylulose 5-phosphate from D-glyceraldehyde 3-phosphate and pyruvate: step 1/1. Its function is as follows. Catalyzes the acyloin condensation reaction between C atoms 2 and 3 of pyruvate and glyceraldehyde 3-phosphate to yield 1-deoxy-D-xylulose-5-phosphate (DXP). The chain is 1-deoxy-D-xylulose-5-phosphate synthase from Clavibacter sepedonicus (Clavibacter michiganensis subsp. sepedonicus).